Here is a 269-residue protein sequence, read N- to C-terminus: Formamidopyrimidine-DNA glycosylase (269 aa).

The active-site Schiff-base intermediate with DNA is the Pro2. Catalysis depends on Glu3, which acts as the Proton donor. The Proton donor; for beta-elimination activity role is filled by Lys57. Residues His90, Arg109, and Lys150 each coordinate DNA. Residues 235-269 form an FPG-type zinc finger; that stretch reads QVYGRKGEPCRVCGTPIVATKHAQRATFYCRHCQK. The active-site Proton donor; for delta-elimination activity is Arg259.

This sequence belongs to the FPG family. Monomer. It depends on Zn(2+) as a cofactor.

The enzyme catalyses Hydrolysis of DNA containing ring-opened 7-methylguanine residues, releasing 2,6-diamino-4-hydroxy-5-(N-methyl)formamidopyrimidine.. The catalysed reaction is 2'-deoxyribonucleotide-(2'-deoxyribose 5'-phosphate)-2'-deoxyribonucleotide-DNA = a 3'-end 2'-deoxyribonucleotide-(2,3-dehydro-2,3-deoxyribose 5'-phosphate)-DNA + a 5'-end 5'-phospho-2'-deoxyribonucleoside-DNA + H(+). In terms of biological role, involved in base excision repair of DNA damaged by oxidation or by mutagenic agents. Acts as a DNA glycosylase that recognizes and removes damaged bases. Has a preference for oxidized purines, such as 7,8-dihydro-8-oxoguanine (8-oxoG). Has AP (apurinic/apyrimidinic) lyase activity and introduces nicks in the DNA strand. Cleaves the DNA backbone by beta-delta elimination to generate a single-strand break at the site of the removed base with both 3'- and 5'-phosphates. The polypeptide is Formamidopyrimidine-DNA glycosylase (Salmonella dublin (strain CT_02021853)).